Consider the following 657-residue polypeptide: Replication restart protein PriA (657 aa).

The Helicase ATP-binding domain occupies 143 to 309 (ITASTGARSF…LRGAVRRLPL (167 aa)). 156–163 (GVTGSGKT) is an ATP binding site. A DEAH box motif is present at residues 252 to 255 (DEEH). Residues cysteine 366, cysteine 369, cysteine 375, cysteine 378, cysteine 393, cysteine 396, cysteine 406, and cysteine 409 each coordinate Zn(2+). The Helicase C-terminal domain maps to 390–570 (AMQCHYCGRQ…PFVRLIRFVF (181 aa)).

Belongs to the helicase family. PriA subfamily. Component of the replication restart primosome. It depends on Zn(2+) as a cofactor.

The enzyme catalyses Couples ATP hydrolysis with the unwinding of duplex DNA by translocating in the 3'-5' direction.. It carries out the reaction ATP + H2O = ADP + phosphate + H(+). Its function is as follows. Initiates the restart of stalled replication forks, which reloads the replicative helicase on sites other than the origin of replication. Recognizes and binds to abandoned replication forks and remodels them to uncover a helicase loading site. Promotes assembly of the primosome at these replication forks. The chain is Replication restart protein PriA from Treponema pallidum (strain Nichols).